The chain runs to 31 residues: Nemertide alpha-6 (31 aa).

3 disulfide bridges follow: cysteine 2–cysteine 16, cysteine 9–cysteine 20, and cysteine 15–cysteine 26. 4-hydroxyproline is present on residues proline 28 and proline 29.

Belongs to the nemertide family. As to expression, confined to the epidermis and to the mucus layer.

It is found in the secreted. In terms of biological role, highly potent toxin against both insect and some mammalian sodium channels (Nav). It potently inhibits inactivation of insect sodium channels of B.germanica (BgNav1) (EC(50)=2.6 nM) and also delays the inactivation of mammalian Nav with potent activity on Nav1.1/SCN1A (hNav1.1/SCN1A; EC(50)=7.9 nM, rNav1.2/SCN2A; EC(50)=24.3 nM, rNav1.3/SCN3A; EC(50)=105.6 nM, rNav1.4/SCN4A; EC(50)=46.4 nM, hNav1.5/SCN5A; EC(50)=215.2 nM, mNav1.6/SCN8A; EC(50)=36.3 nM, hNav1.9/SCN9A; EC(50)=97.2 nM). 1 uM is enough to completely inhibits the inactivation, resulting in sustained non-inactivating currents. In addition, the toxin significantly enhances the recovery from inactivation, and the open state is not required for the toxin to interact with the channel. In vivo, injection into brine shrimp (Artemia salina) stops movement or causes death after 24 hours (EC(50)=2.8 uM). This chain is Nemertide alpha-6, found in Lineus sanguineus (Ribbon worm).